The sequence spans 81 residues: Cytotoxin I-like P-15 (81 aa).

An N-terminal signal peptide occupies residues 1–21; sequence MKTLLLTLAAATIVCLDLGYT. 4 disulfide bridges follow: Cys24–Cys42, Cys35–Cys59, Cys63–Cys74, and Cys75–Cys80.

The protein belongs to the three-finger toxin family. Short-chain subfamily. Type IA cytotoxin sub-subfamily. As to quaternary structure, monomer in solution; Homodimer and oligomer in the presence of negatively charged lipids forming a pore with a size ranging between 20 and 30 Angstroms. Expressed by the venom gland.

It localises to the secreted. It is found in the target cell membrane. Its function is as follows. Shows cytolytic activity on many different cells by forming pore in lipid membranes. In vivo, increases heart rate or kills the animal by cardiac arrest. In addition, it binds to heparin with high affinity, interacts with Kv channel-interacting protein 1 (KCNIP1) in a calcium-independent manner, and binds to integrin alpha-V/beta-3 (ITGAV/ITGB3) with moderate affinity. The chain is Cytotoxin I-like P-15 from Naja atra (Chinese cobra).